Here is a 257-residue protein sequence, read N- to C-terminus: Diphthine synthase (257 aa).

S-adenosyl-L-methionine-binding positions include Ile-11, Asp-89, Ile-92, 117-118, Leu-169, Leu-210, and His-235; that span reads SV.

The protein belongs to the diphthine synthase family. As to quaternary structure, homodimer.

It carries out the reaction 2-[(3S)-amino-3-carboxypropyl]-L-histidyl-[translation elongation factor 2] + 3 S-adenosyl-L-methionine = diphthine-[translation elongation factor 2] + 3 S-adenosyl-L-homocysteine + 3 H(+). It functions in the pathway protein modification; peptidyl-diphthamide biosynthesis. Its function is as follows. S-adenosyl-L-methionine-dependent methyltransferase that catalyzes the trimethylation of the amino group of the modified target histidine residue in translation elongation factor 2 (EF-2), to form an intermediate called diphthine. The three successive methylation reactions represent the second step of diphthamide biosynthesis. The polypeptide is Diphthine synthase (Saccharolobus islandicus (strain L.S.2.15 / Lassen #1) (Sulfolobus islandicus)).